The sequence spans 257 residues: Protein Cmaq_1209 (257 aa).

The protein belongs to the CinA family.

The protein is Protein Cmaq_1209 of Caldivirga maquilingensis (strain ATCC 700844 / DSM 13496 / JCM 10307 / IC-167).